The primary structure comprises 337 residues: Neurogenic differentiation factor 6 (337 aa).

The disordered stretch occupies residues 43–82; the sequence is LRGKSIKRAPGEETEKEEEEEDREEEDENGLPRRRGLRKK. The segment covering 54–71 has biased composition (acidic residues); sequence EETEKEEEEEDREEEDEN. Residues 80 to 86 carry the Nuclear localization signal motif; sequence RKKKTTK. In terms of domain architecture, bHLH spans 94–146; it reads FRRQEANARERNRMHGLNDALDNLRKVVPCYSKTQKLSKIETLRLAKNYIWAL.

Efficient DNA binding requires dimerization with another bHLH protein.

It is found in the nucleus. In terms of biological role, activates E box-dependent transcription in collaboration with TCF3/E47. May be a trans-acting factor involved in the development and maintenance of the mammalian nervous system. Transactivates the promoter of its own gene. The protein is Neurogenic differentiation factor 6 (NEUROD6) of Homo sapiens (Human).